Consider the following 293-residue polypeptide: ATP synthase gamma chain (293 aa).

It belongs to the ATPase gamma chain family. F-type ATPases have 2 components, CF(1) - the catalytic core - and CF(0) - the membrane proton channel. CF(1) has five subunits: alpha(3), beta(3), gamma(1), delta(1), epsilon(1). CF(0) has three main subunits: a, b and c.

The protein localises to the cell inner membrane. Produces ATP from ADP in the presence of a proton gradient across the membrane. The gamma chain is believed to be important in regulating ATPase activity and the flow of protons through the CF(0) complex. The protein is ATP synthase gamma chain of Allorhizobium ampelinum (strain ATCC BAA-846 / DSM 112012 / S4) (Agrobacterium vitis (strain S4)).